We begin with the raw amino-acid sequence, 1018 residues long: MKNNLRYGIRKHKLGAASVFLGTMIVVGMGQDKEAAASEQKTTTVEENGNSATDNKTSETQTTATNVNHIEETQSYNATVTEQPSNATQVTTEEAPKAVQAPQTAQPANIETVKEEVVKEEAKPQVKETTQSQDNSGDQRQVDLTPKKATQNQVAETQVEVAQPRTASESKPRVTRSADVAEAKEASNAKVETGTDVTSKVTVEIGSIEGHNNTNKVEPHAGQRAVLKYKLKFENGLHQGDYFDFTLSNNVNTHGVSTARKVPEIKNGSVVMATGEVLEGGKIRYTFTNDIEDKVDVTAELEINLFIDPKTVQTNGNQTITSTLNEEQTSKELDVKYKDGIGNYYANLNGSIETFNKANNRFSHVAFIKPNNGKTTSVTVTGTLMKGSNQNGNQPKVRIFEYLGNNEDIAKSVYANTTDTSKFKEVTSNMSGNLNLQNNGSYSLNIENLDKTYVVHYDGEYLNGTDEVDFRTQMVGHPEQLYKYYYDRGYTLTWDNGLVLYSNKANGNGKNGPIIQNNKFEYKEDTIKETLTGQYDKNLVTTVEEEYDSSTLDIDYHTAIDGGGGYVDGYIETIEETDSSAIDIDYHTAVDSEAGHVGGYTESSEESNPIDFEESTHENSKHHADVVEYEEDTNPGGGQVTTESNLVEFDEESTKGIVTGAVSDHTTVEDTKEYTTESNLIELVDELPEEHGQAQGPVEEITENNHHISHSGLGTENGHGNYDVIEEIEENSHVDIKSELGYEGGQNSGNQSFEEDTEEDKPKYEQGGNIVDIDFDSVPQIHGQNKGNQSFEEDTEKDKPKYEHGGNIIDIDFDSVPHIHGFNKHTEIIEEDTNKDKPSYQFGGHNSVDFEEDTLPKVSGQNEGQQTIEEDTTPPIVPPTPPTPEVPSEPETPTPPTPEVPSEPETPTPPTPEVPSEPETPTPPTPEVPAEPGKPVPPAKEEPKKPSKPVEQGKVVTPVIEINEKVKAVAPTKKPQSKKSELPETGGEESTNKGMLFGGLFSILGLALLRRNKKNHKA.

Positions 1–36 (MKNNLRYGIRKHKLGAASVFLGTMIVVGMGQDKEAA) are cleaved as a signal peptide. The short motif at 7-18 (YGIRKHKLGAAS) is the YSIRK-G/S signaling motif element. A ligand-binding A region region spans residues 37–511 (ASEQKTTTVE…SNKANGNGKN (475 aa)). Disordered stretches follow at residues 38–61 (SEQKTTTVEENGNSATDNKTSETQ) and 78–195 (ATVT…ETGT). Polar residues-rich tracts occupy residues 39–61 (EQKTTTVEENGNSATDNKTSETQ) and 78–92 (ATVTEQPSNATQVTT). Residues 112–126 (TVKEEVVKEEAKPQV) are compositionally biased toward basic and acidic residues. Over residues 129–139 (TTQSQDNSGDQ) the composition is skewed to polar residues. The tract at residues 194–511 (GTDVTSKVTV…SNKANGNGKN (318 aa)) is fibrinogen/elastin/tropoelastin-binding. Residues 512–872 (GPIIQNNKFE…EGQQTIEEDT (361 aa)) form a fibronectin-binding region. The B-1 repeat unit spans residues 545–574 (EEYDSSTLDIDYHTAIDGGGGYVDGYIETI). Positions 545–604 (EEYDSSTLDIDYHTAIDGGGGYVDGYIETIEETDSSAIDIDYHTAVDSEAGHVGGYTESS) are 2 X approximate tandem repeats. The B-2 repeat unit spans residues 575–604 (EETDSSAIDIDYHTAVDSEAGHVGGYTESS). 3 disordered regions span residues 595–622 (GHVGGYTESSEESNPIDFEESTHENSKH), 740–813 (LGYE…DIDF), and 827–997 (EIIE…GMLF). A D-1 repeat occupies 745-782 (GQNSGNQSFEEDTEEDKPKYEQGGNIVDIDFDSVPQIH). Residues 745–878 (GQNSGNQSFE…EEDTTPPIVP (134 aa)) are 4 X approximate tandem repeats. Residues 783-820 (GQNKGNQSFEEDTEKDKPKYEHGGNIIDIDFDSVPHIH) form a D-2 repeat. The D-3 repeat unit spans residues 821–859 (GFNKHTEIIEEDTNKDKPSYQFGGHNSVDFEEDTLPKVS). Residues 827–838 (EIIEEDTNKDKP) are compositionally biased toward basic and acidic residues. Residues 860-878 (GQNEGQQTIEEDTTPPIVP) form a D-4; truncated repeat. Residues 875–938 (PIVPPTPPTP…PAEPGKPVPP (64 aa)) are compositionally biased toward pro residues. WR repeat units follow at residues 879-892 (PTPPTPEVPSEPET), 893-906 (PTPPTPEVPSEPET), 907-920 (PTPPTPEVPSEPET), 921-934 (PTPPTPEVPAEPGK), and 935-948 (PVPPAKEEPKKPSK). The tract at residues 879-948 (PTPPTPEVPS…AKEEPKKPSK (70 aa)) is 5 X tandem repeats, Pro-rich (WR). An LPXTG sorting signal motif is present at residues 982–986 (LPETG). Thr-985 is subject to Pentaglycyl murein peptidoglycan amidated threonine. Positions 986 to 1018 (GGEESTNKGMLFGGLFSILGLALLRRNKKNHKA) are cleaved as a propeptide — removed by sortase.

The protein resides in the secreted. It is found in the cell wall. Promotes bacterial attachment to multiple substrates, such as fibronectin (Fn), fibrinogen (Fg), elastin peptides and tropoelastin. This confers to S.aureus the ability to invade endothelial cells. Promotes adherence to and aggregation of activated platelets. The protein is Fibronectin-binding protein A of Staphylococcus aureus (strain USA300).